The chain runs to 378 residues: Lysocardiolipin acyltransferase 1 (378 aa).

2 helical membrane-spanning segments follow: residues 9–29 (FVVA…GPFL) and 46–66 (IVAT…GAKV). Positions 85 to 90 (HRTRMD) match the HXXXXD motif motif. 2 consecutive transmembrane segments (helical) span residues 302-322 (LRVL…PMGT) and 336-358 (FAAM…LIEL).

It belongs to the 1-acyl-sn-glycerol-3-phosphate acyltransferase family.

It localises to the endoplasmic reticulum membrane. The catalysed reaction is a 1-acyl-sn-glycero-3-phosphate + an acyl-CoA = a 1,2-diacyl-sn-glycero-3-phosphate + CoA. It catalyses the reaction a 1-acyl-sn-glycero-3-phospho-(1D-myo-inositol) + an acyl-CoA = a 1,2-diacyl-sn-glycero-3-phospho-(1D-myo-inositol) + CoA. The enzyme catalyses 1-acyl-sn-glycero-3-phospho-(1'-sn-glycerol) + an acyl-CoA = a 1,2-diacyl-sn-glycero-3-phospho-(1'-sn-glycerol) + CoA. It carries out the reaction 1-hexadecanoyl-sn-glycero-3-phosphate + (9Z)-octadecenoyl-CoA = 1-hexadecanoyl-2-(9Z-octadecenoyl)-sn-glycero-3-phosphate + CoA. The catalysed reaction is 1-(9Z-octadecenoyl)-sn-glycero-3-phosphate + (9Z)-octadecenoyl-CoA = 1,2-di-(9Z-octadecenoyl)-sn-glycero-3-phosphate + CoA. It catalyses the reaction 1-(9Z,12Z)-octadecadienoyl-sn-glycero-3-phosphate + (9Z)-octadecenoyl-CoA = 1-(9Z,12Z)-octadecadienoyl-2-(9Z)-octadecenoyl-sn-glycero-3-phosphate + CoA. The enzyme catalyses 1-(9Z,12Z,15Z)-octadecatrienoyl-sn-glycero-3-phosphate + (9Z)-octadecenoyl-CoA = 1-(9Z,12Z,15Z)-octadecatrienoyl-2-(9Z)-octadecenoyl-sn-glycero-3-phosphate + CoA. It carries out the reaction 1-(9Z-octadecenoyl)-sn-glycero-3-phosphate + hexadecanoyl-CoA = 1-(9Z)-octadecenoyl-2-hexadecanoyl-sn-glycero-3-phosphate + CoA. The catalysed reaction is 1-(9Z-octadecenoyl)-sn-glycero-3-phosphate + octadecanoyl-CoA = 1-(9Z-octadecenoyl)-2-octadecanoyl-sn-glycero-3-phosphate + CoA. It catalyses the reaction 1-acyl-sn-glycero-3-phospho-(1'-sn-glycerol) + (9Z)-octadecenoyl-CoA = 1-acyl-2-(9Z-octadecenoyl)-sn-glycero-3-phospho-(1'-sn-glycerol) + CoA. The enzyme catalyses a 1-acyl-sn-glycero-3-phospho-(1D-myo-inositol) + (9Z)-octadecenoyl-CoA = a 1-acyl-2-(9Z-octadecenoyl)-sn-glycero-3-phospho-(1D-myo-inositol) + CoA. It carries out the reaction 1-hexadecanoyl-sn-glycero-3-phospho-(1D-myo-inositol) + hexadecanoyl-CoA = 1,2-dihexadecanoyl-sn-glycero-3-phospho-(1D-myo-inositol) + CoA. The catalysed reaction is 1-hexadecanoyl-sn-glycero-3-phospho-(1D-myo-inositol) + octadecanoyl-CoA = 1-hexadecanoyl-2-octadecanoyl-sn-glycero-3-phospho-(1D-myo-inositol) + CoA. It catalyses the reaction 1-hexadecanoyl-sn-glycero-3-phospho-(1D-myo-inositol) + (9Z)-octadecenoyl-CoA = 1-hexadecanoyl-2-(9Z-octadecenoyl)-sn-glycero-3-phospho-(1D-myo-inositol) + CoA. The enzyme catalyses 1-hexadecanoyl-sn-glycero-3-phospho-(1D-myo-inositol) + (9Z,12Z)-octadecadienoyl-CoA = 1-hexadecanoyl-2-(9Z,12Z-octadecadienoyl)-sn-glycero-3-phospho-(1D-myo-inositol) + CoA. It carries out the reaction 1-hexadecanoyl-sn-glycero-3-phospho-(1D-myo-inositol) + (5Z,8Z,11Z,14Z)-eicosatetraenoyl-CoA = 1-hexadecanoyl-2-(5Z,8Z,11Z,14Z-eicosatetraenoyl)-sn-glycero-3-phospho-D-myo-inositol + CoA. The catalysed reaction is 1-hexadecanoyl-sn-glycero-3-phospho-(1'-sn-glycerol) + hexadecanoyl-CoA = 1,2-dihexadecanoyl-sn-glycero-3-phospho-(1'-sn-glycerol) + CoA. It catalyses the reaction 1-hexadecanoyl-sn-glycero-3-phospho-(1'-sn-glycerol) + octadecanoyl-CoA = 1-hexadecanoyl-2-octadecanoyl-sn-glycero-3-phospho-(1'-sn-glycerol) + CoA. The enzyme catalyses 1-hexadecanoyl-sn-glycero-3-phospho-(1'-sn-glycerol) + (9Z)-octadecenoyl-CoA = 1-hexadecanoyl-2-(9Z-octadecenoyl)-sn-glycero-3-phospho-(1'-sn-glycerol) + CoA. It carries out the reaction 1-hexadecanoyl-sn-glycero-3-phospho-(1'-sn-glycerol) + (9Z,12Z)-octadecadienoyl-CoA = 1-hexadecanoyl-2-(9Z,12Z-octadecadienoyl)-sn-glycero-3-phospho-(1'-sn-glycerol) + CoA. The catalysed reaction is 1-tetradecanoyl-sn-glycero-3-phospho-(1'-sn-glycerol) + (9Z)-octadecenoyl-CoA = 1-tetradecanoyl-2-(9Z-octadecenoyl)-sn-glycero-3-phospho-(1'-sn-glycerol) + CoA. It catalyses the reaction 1-octadecanoyl-sn-glycero-3-phospho-(1'-sn-glycerol) + (9Z)-octadecenoyl-CoA = 1-octadecanoyl-2-(9Z-octadecenoyl)-sn-glycero-3-phospho-(1'-sn-glycerol) + CoA. The enzyme catalyses 1-(9Z-octadecenoyl)-sn-glycero-3-phospho-(1'-sn-glycerol) + (9Z)-octadecenoyl-CoA = 1,2-di-(9Z-octadecenoyl)-sn-glycero-3-phospho-(1'-sn-glycerol) + CoA. It carries out the reaction 1-hexadecanoyl-sn-glycero-3-phospho-(1D-myo-inositol) + dodecanoyl-CoA = 1-hexadecanoyl-2-dodecanoyl-sn-glycero-3-phospho-(1D-myo-inositol) + CoA. The catalysed reaction is 1',3'-bis-[1-acyl-sn-glycero-3-phospho]-glycerol + (9Z)-octadecenoyl-CoA = 1'-[1-acyl-2-(9Z)-octadecenoyl-sn-glycero-3-phospho],3'-[1-acyl,2-hydroxy-sn-glycero-3-phospho]-glycerol + CoA. It catalyses the reaction 1'-[1,2-diacyl-sn-glycero-3-phospho],3'-[1-acyl-sn-glycero-3-phospho]-glycerol + (9Z)-octadecenoyl-CoA = 1'-[1,2-diacyl-sn-glycero-3-phospho],3'-[1-acyl,2-(9Z)-octadecenoyl-sn-glycero-3-phospho]-glycerol + CoA. The enzyme catalyses 1'-[1,2-diacyl-sn-glycero-3-phospho],3'-[1-acyl-sn-glycero-3-phospho]-glycerol + (9Z,12Z)-octadecadienoyl-CoA = 1'-[1,2-diacyl-sn-glycero-3-phospho],3'-[1-acyl,2-(9Z,12Z)-octadecadienoyl-sn-glycero-3-phospho]-glycerol + CoA. It carries out the reaction 1'-[1,2-diacyl-sn-glycero-3-phospho],3'-[1-acyl-sn-glycero-3-phospho]-glycerol + dodecanoyl-CoA = 1'-[1,2-diacyl-sn-glycero-3-phospho],3'-[1-acyl,2-dodecanoyl-sn-glycero-3-phospho]-glycerol + CoA. The catalysed reaction is 1',3'-bis-[1-acyl-sn-glycero-3-phospho]-glycerol + dodecanoyl-CoA = 1'-[1-acyl-2-dodecanoyl-sn-glycero-3-phospho],3'-[1-acyl,2-hydroxy-sn-glycero-3-phospho]-glycerol + CoA. It catalyses the reaction a 1-acyl-sn-glycero-3-phosphate + (9Z)-octadecenoyl-CoA = a 1-acyl-2-(9Z-octadecenoyl)-sn-glycero-3-phosphate + CoA. The enzyme catalyses 1',3'-bis-[1-acyl-sn-glycero-3-phospho]-glycerol + (9Z,12Z)-octadecadienoyl-CoA = 1'-[1-acyl-2-(9Z,12Z)-octadecadienoyl-sn-glycero-3-phospho],3'-[1-acyl,2-hydroxy-sn-glycero-3-phospho]-glycerol + CoA. It carries out the reaction 1',3'-bis-[1-acyl-sn-glycero-3-phospho]-glycerol + hexadecanoyl-CoA = 1'-[1-acyl-2-hexadecanoyl-sn-glycero-3-phospho],3'-[1-acyl,2-hydroxy-sn-glycero-3-phospho]-glycerol + CoA. The catalysed reaction is 1',3'-bis-[1-acyl-sn-glycero-3-phospho]-glycerol + octadecanoyl-CoA = 1'-[1-acyl-2-octadecanoyl-sn-glycero-3-phospho],3'-[1-acyl,2-hydroxy-sn-glycero-3-phospho]-glycerol + CoA. It catalyses the reaction 1'-[1,2-diacyl-sn-glycero-3-phospho],3'-[1-acyl-sn-glycero-3-phospho]-glycerol + octanoyl-CoA = 1'-[1,2-diacyl-sn-glycero-3-phospho],3'-[1-acyl,2-octanoyl-sn-glycero-3-phospho]-glycerol + CoA. The enzyme catalyses 1',3'-bis-[1-acyl-sn-glycero-3-phospho]-glycerol + octanoyl-CoA = 1'-[1-acyl-2-octanoyl-sn-glycero-3-phospho],3'-[1-acyl,2-hydroxy-sn-glycero-3-phospho]-glycerol + CoA. It carries out the reaction 1'-[1,2-diacyl-sn-glycero-3-phospho],3'-[1-acyl-sn-glycero-3-phospho]-glycerol + hexadecanoyl-CoA = 1'-[1,2-diacyl-sn-glycero-3-phospho],3'-[1-acyl,2-hexadecanoyl-sn-glycero-3-phospho]-glycerol + CoA. The catalysed reaction is 1'-[1,2-diacyl-sn-glycero-3-phospho],3'-[1-acyl-sn-glycero-3-phospho]-glycerol + (5Z,8Z,11Z,14Z)-eicosatetraenoyl-CoA = 1'-[1,2-diacyl-sn-glycero-3-phospho],3'-[1-acyl,2-(5Z,8Z,11Z,14Z)-eicosatetraenoyl-sn-glycero-3-phospho]-glycerol + CoA. It catalyses the reaction 1',3'-bis-[1-acyl-sn-glycero-3-phospho]-glycerol + (5Z,8Z,11Z,14Z)-eicosatetraenoyl-CoA = 1'-[1-acyl-2-(5Z,8Z,11Z,14Z)-eicosatetraenoyl-sn-glycero-3-phospho],3'-[1-acyl,2-hydroxy-sn-glycero-3-phospho]-glycerol + CoA. The enzyme catalyses a 1-acyl-sn-glycero-3-phospho-(1D-myo-inositol) + octadecanoyl-CoA = a 1-acyl-2-octadecanoyl-sn-glycero-3-phospho-(1D-myo-inositol) + CoA. It carries out the reaction a 2-acyl-sn-glycero-3-phospho-D-myo-inositol + octadecanoyl-CoA = 1-octadecanoyl-2-acyl-sn-glycero-3-phospho-1D-myo-inositol + CoA. The protein operates within phospholipid metabolism; CDP-diacylglycerol biosynthesis; CDP-diacylglycerol from sn-glycerol 3-phosphate: step 2/3. Exhibits acyl-CoA:lysocardiolipin acyltransferase (ALCAT) activity; catalyzes the reacylation of lyso-cardiolipin to cardiolipin (CL), a key step in CL remodeling. Recognizes both monolysocardiolipin and dilysocardiolipin as substrates with a preference for linoleoyl-CoA and oleoyl-CoA as acyl donors. Also exhibits 1-acyl-sn-glycerol-3-phosphate acyltransferase activity (AGPAT) activity; converts 1-acyl-sn-glycerol-3- phosphate (lysophosphatidic acid or LPA) into 1,2-diacyl-sn-glycerol-3- phosphate (phosphatidic acid or PA) by incorporating an acyl moiety at the sn-2 position of the glycerol backbone. Possesses both lysophosphatidylinositol acyltransferase (LPIAT) and lysophosphatidylglycerol acyltransferase (LPGAT) activities. Required for establishment of the hematopoietic and endothelial lineages. This chain is Lysocardiolipin acyltransferase 1 (LCLAT1), found in Gallus gallus (Chicken).